The primary structure comprises 259 residues: Uridylate kinase (259 aa).

10-13 contributes to the ATP binding site; sequence KLSG. UMP is bound at residue Gly52. Residues Gly53 and Arg57 each contribute to the ATP site. UMP contacts are provided by residues Asp72 and 134–141; that span reads NGQPFLTT. ATP-binding residues include Tyr168 and Asp171. Positions 236-259 are disordered; the sequence is ISSSPEKSEEFGNEVLASPAESTA.

The protein belongs to the UMP kinase family. In terms of assembly, homohexamer.

The protein localises to the cytoplasm. The catalysed reaction is UMP + ATP = UDP + ADP. It participates in pyrimidine metabolism; CTP biosynthesis via de novo pathway; UDP from UMP (UMPK route): step 1/1. With respect to regulation, inhibited by UTP. In terms of biological role, catalyzes the reversible phosphorylation of UMP to UDP. This is Uridylate kinase from Frankia casuarinae (strain DSM 45818 / CECT 9043 / HFP020203 / CcI3).